A 2341-amino-acid polypeptide reads, in one-letter code: Pecanex-like protein 1 (2341 aa).

2 helical membrane-spanning segments follow: residues 28 to 50 (ATFVNALHLYLWLFLLGLPFTLY) and 57 to 74 (MIIVAVYCPVIAAVFIVL). The disordered stretch occupies residues 98-163 (FTDQRTKAEQ…SNQIGSGSSR (66 aa)). N-linked (GlcNAc...) asparagine glycosylation is present at Asn-109. Residues 143-163 (SSRNSYAGLDPSNQIGSGSSR) are compositionally biased toward polar residues. Asn-215 carries N-linked (GlcNAc...) asparagine glycosylation. Disordered stretches follow at residues 270 to 294 (HSHSYRKDHRPRGVPRTSSSAVAFP), 311 to 331 (DPVSELESSKPLSGSKESLVE), and 344 to 689 (DLKI…TRAR). Basic residues predominate over residues 272–282 (HSYRKDHRPRG). 2 stretches are compositionally biased toward polar residues: residues 320–331 (KPLSGSKESLVE) and 347–356 (INTSQPPTKS). N-linked (GlcNAc...) asparagine glycosylation occurs at Asn-348. Residues 370 to 388 (SLRSLSTRSSGSTESYCSG) are compositionally biased toward low complexity. Residue Asn-394 is glycosylated (N-linked (GlcNAc...) asparagine). Over residues 394 to 404 (NSTVSSYKSEQ) the composition is skewed to polar residues. 3 stretches are compositionally biased toward basic and acidic residues: residues 430–455 (KKECCAGPEEKNSCASDKRTSSEKIA), 465–478 (HEAKDPTPSDEMHN), and 527–544 (SKVRKDVGGKQKEGDVRP). Over residues 554–569 (ASAHKSGRRRTGKKRA) the composition is skewed to basic residues. The span at 605-635 (QSDLSRASSVQSAHQFSSDSSSSTTSHSCQS) shows a compositional bias: low complexity. Asn-702 is a glycosylation site (N-linked (GlcNAc...) asparagine). A disordered region spans residues 756 to 834 (QVAFPEGEEQ…STAQVKVQSR (79 aa)). The segment covering 814–832 (LSLQDGQQGQQSTAQVKVQ) has biased composition (low complexity). 2 N-linked (GlcNAc...) asparagine glycosylation sites follow: Asn-852 and Asn-863. Transmembrane regions (helical) follow at residues 1003–1025 (ILENVLAVILAILVAFLGSILLI), 1032–1049 (IWVFQFCLVIASCQYSLL), and 1067–1089 (IAYSRPVYFCICCGLIWLLDYGS). N-linked (GlcNAc...) asparagine glycosylation is present at Asn-1091. The chain crosses the membrane as a helical span at residues 1110–1132 (FISARDLVIVFTLCFPIVFFIGL). Residue Asn-1155 is glycosylated (N-linked (GlcNAc...) asparagine). The next 4 membrane-spanning stretches (helical) occupy residues 1160–1182 (LLAALYSFICSIVAVALLYGLCY), 1194–1213 (IPVLFSIFCGLLVAVSYHLS), 1266–1288 (LVVCIVIGVLYFAIHVSTVFTVL), and 1295–1312 (VLYTLVGFVGFVTHYVLP). N-linked (GlcNAc...) asparagine glycans are attached at residues Asn-1579, Asn-1720, Asn-1982, Asn-2062, and Asn-2072. Disordered stretches follow at residues 2062-2120 (NATT…SPAR) and 2217-2237 (GQSSATDAQPGNTLSPANNSH). Composition is skewed to polar residues over residues 2069–2078 (PHSNVTQGSI), 2096–2114 (YPPTLGTSHSSHSVQSGLV), and 2217–2236 (GQSSATDAQPGNTLSPANNS). Residues Asn-2234 and Asn-2260 are each glycosylated (N-linked (GlcNAc...) asparagine).

It belongs to the pecanex family.

It localises to the membrane. This Homo sapiens (Human) protein is Pecanex-like protein 1.